Consider the following 606-residue polypeptide: Pescadillo homolog (606 aa).

The region spanning 346 to 447 (LSTSLFSPYT…KILLEGPYGQ (102 aa)) is the BRCT domain. Residues 461–497 (YEGAYDPAAGPLGPSGVEQESESEADEVSEEDEEDQG) form a disordered region. The segment covering 479–496 (QESESEADEVSEEDEEDQ) has biased composition (acidic residues).

The protein belongs to the pescadillo family. In terms of assembly, component of the NOP7 complex, composed of ERB1, NOP7 and YTM1. The complex is held together by ERB1, which interacts with NOP7 via its N-terminal domain and with YTM1 via a high-affinity interaction between the seven-bladed beta-propeller domains of the 2 proteins. The NOP7 complex associates with the 66S pre-ribosome.

The protein resides in the nucleus. It localises to the nucleolus. It is found in the nucleoplasm. Component of the NOP7 complex, which is required for maturation of the 25S and 5.8S ribosomal RNAs and formation of the 60S ribosome. This is Pescadillo homolog from Laccaria bicolor (strain S238N-H82 / ATCC MYA-4686) (Bicoloured deceiver).